The chain runs to 366 residues: Chorismate synthase (366 aa).

The NADP(+) site is built by arginine 48 and arginine 54. Residues 125–127 (RSS), 241–242 (NA), glycine 285, 300–304 (KPTSS), and arginine 326 each bind FMN.

This sequence belongs to the chorismate synthase family. In terms of assembly, homotetramer. The cofactor is FMNH2.

It carries out the reaction 5-O-(1-carboxyvinyl)-3-phosphoshikimate = chorismate + phosphate. The protein operates within metabolic intermediate biosynthesis; chorismate biosynthesis; chorismate from D-erythrose 4-phosphate and phosphoenolpyruvate: step 7/7. Its function is as follows. Catalyzes the anti-1,4-elimination of the C-3 phosphate and the C-6 proR hydrogen from 5-enolpyruvylshikimate-3-phosphate (EPSP) to yield chorismate, which is the branch point compound that serves as the starting substrate for the three terminal pathways of aromatic amino acid biosynthesis. This reaction introduces a second double bond into the aromatic ring system. The polypeptide is Chorismate synthase (Cereibacter sphaeroides (strain ATCC 17029 / ATH 2.4.9) (Rhodobacter sphaeroides)).